Here is a 248-residue protein sequence, read N- to C-terminus: Ubiquinone biosynthesis O-methyltransferase (248 aa).

Residues Arg40, Gly71, Asp92, and Met135 each contribute to the S-adenosyl-L-methionine site.

The protein belongs to the methyltransferase superfamily. UbiG/COQ3 family.

The enzyme catalyses a 3-demethylubiquinol + S-adenosyl-L-methionine = a ubiquinol + S-adenosyl-L-homocysteine + H(+). It carries out the reaction a 3-(all-trans-polyprenyl)benzene-1,2-diol + S-adenosyl-L-methionine = a 2-methoxy-6-(all-trans-polyprenyl)phenol + S-adenosyl-L-homocysteine + H(+). Its pathway is cofactor biosynthesis; ubiquinone biosynthesis. O-methyltransferase that catalyzes the 2 O-methylation steps in the ubiquinone biosynthetic pathway. The chain is Ubiquinone biosynthesis O-methyltransferase from Dinoroseobacter shibae (strain DSM 16493 / NCIMB 14021 / DFL 12).